We begin with the raw amino-acid sequence, 358 residues long: Spermatogenesis-associated protein 22 (358 aa).

4 stretches are compositionally biased toward polar residues: residues methionine 1–serine 12, glutamine 30–glycine 51, proline 81–arginine 121, and glutamine 150–glutamate 159. Disordered stretches follow at residues methionine 1–glycine 51, proline 81–threonine 122, and glutamine 150–proline 172.

Component of a multiprotein complex with MEIOB and RPA2. Interacts with MEIOB. Interacts with the complex BRME1:HSF2BP:BRCA2. Specifically expressed in gonadal germ cells, when male and female germ cells progress through prophase of meiosis I.

The protein resides in the chromosome. Its function is as follows. Meiosis-specific protein required for homologous recombination in meiosis I. The sequence is that of Spermatogenesis-associated protein 22 from Mus musculus (Mouse).